A 206-amino-acid polypeptide reads, in one-letter code: Small ribosomal subunit protein uS4 (206 aa).

The interval Pro-27 to Arg-47 is disordered. The region spanning Gln-96–Ala-158 is the S4 RNA-binding domain.

Belongs to the universal ribosomal protein uS4 family. In terms of assembly, part of the 30S ribosomal subunit. Contacts protein S5. The interaction surface between S4 and S5 is involved in control of translational fidelity.

In terms of biological role, one of the primary rRNA binding proteins, it binds directly to 16S rRNA where it nucleates assembly of the body of the 30S subunit. With S5 and S12 plays an important role in translational accuracy. The protein is Small ribosomal subunit protein uS4 of Dichelobacter nodosus (strain VCS1703A).